The sequence spans 319 residues: Shiga-like toxin 2 subunit A (319 aa).

Residues M1–S22 form the signal peptide. Positions R23–R272 are A1. E189 is a catalytic residue. A disulfide bond links C263 and C282. An A2 region spans residues A273 to L314.

It belongs to the ribosome-inactivating protein family. In terms of assembly, shiga-like toxin contains a single A subunit and multiple copies of a B subunit.

The protein localises to the secreted. It catalyses the reaction Endohydrolysis of the N-glycosidic bond at one specific adenosine on the 28S rRNA.. The A subunit is responsible for inhibiting protein synthesis through the catalytic inactivation of 60S ribosomal subunits. After endocytosis, the A subunit is cleaved by furin in two fragments, A1 and A2: A1 is the catalytically active fragment, and A2 is essential for holotoxin assembly with the B subunits. This chain is Shiga-like toxin 2 subunit A (stxA2), found in Escherichia coli O157:H7 (Bacteriophage 933W).